The primary structure comprises 566 residues: CTP synthase (566 aa).

The segment at 1 to 282 (MSIKRAQLGG…DAYIIDQLGL (282 aa)) is amidoligase domain. Serine 23 provides a ligand contact to CTP. Serine 23 serves as a coordination point for UTP. Residues 24 to 29 (SLGKGL) and aspartate 81 each bind ATP. Mg(2+) is bound by residues aspartate 81 and glutamate 156. Residues 163 to 165 (DIE), 203 to 208 (KTKPTQ), and lysine 239 contribute to the CTP site. Residues 203–208 (KTKPTQ) and lysine 239 each bind UTP. Residues 308–556 (TIGLVGKYID…IGAALDRQKA (249 aa)) enclose the Glutamine amidotransferase type-1 domain. Residue glycine 371 participates in L-glutamine binding. The active-site Nucleophile; for glutamine hydrolysis is cysteine 398. L-glutamine-binding positions include 399 to 402 (LGLQ), glutamate 422, and arginine 482. Active-site residues include histidine 529 and glutamate 531.

The protein belongs to the CTP synthase family. Homotetramer.

The enzyme catalyses UTP + L-glutamine + ATP + H2O = CTP + L-glutamate + ADP + phosphate + 2 H(+). It carries out the reaction L-glutamine + H2O = L-glutamate + NH4(+). The catalysed reaction is UTP + NH4(+) + ATP = CTP + ADP + phosphate + 2 H(+). It participates in pyrimidine metabolism; CTP biosynthesis via de novo pathway; CTP from UDP: step 2/2. Its activity is regulated as follows. Allosterically activated by GTP, when glutamine is the substrate; GTP has no effect on the reaction when ammonia is the substrate. The allosteric effector GTP functions by stabilizing the protein conformation that binds the tetrahedral intermediate(s) formed during glutamine hydrolysis. Inhibited by the product CTP, via allosteric rather than competitive inhibition. Functionally, catalyzes the ATP-dependent amination of UTP to CTP with either L-glutamine or ammonia as the source of nitrogen. Regulates intracellular CTP levels through interactions with the four ribonucleotide triphosphates. The chain is CTP synthase from Leifsonia xyli subsp. xyli (strain CTCB07).